The following is a 237-amino-acid chain: Sugar fermentation stimulation protein homolog (237 aa).

Belongs to the SfsA family.

This chain is Sugar fermentation stimulation protein homolog, found in Methylobacterium radiotolerans (strain ATCC 27329 / DSM 1819 / JCM 2831 / NBRC 15690 / NCIMB 10815 / 0-1).